The primary structure comprises 162 residues: MSRVNPADLNLTDRVVHISRVAKVVKGGRRFSFSALIVVGDGCGYVGYGLGKANEVPEAIRKGVEQAKKNLIKVPVNQNQTIPFEIEGKFGAGRLLMKPASAGTGVIAGGAARAIFEAAGINNILSKCLGSNNPHNVVKAAFAGLQRLKSPEELAARRGITE.

Residues 11 to 74 (LTDRVVHISR…EQAKKNLIKV (64 aa)) enclose the S5 DRBM domain.

Belongs to the universal ribosomal protein uS5 family. In terms of assembly, part of the 30S ribosomal subunit. Contacts proteins S4 and S8.

With S4 and S12 plays an important role in translational accuracy. Functionally, located at the back of the 30S subunit body where it stabilizes the conformation of the head with respect to the body. The chain is Small ribosomal subunit protein uS5 from Pelobacter propionicus (strain DSM 2379 / NBRC 103807 / OttBd1).